The following is a 366-amino-acid chain: Alanine racemase (366 aa).

K40 serves as the catalytic Proton acceptor; specific for D-alanine. K40 bears the N6-(pyridoxal phosphate)lysine mark. R136 contributes to the substrate binding site. Catalysis depends on Y263, which acts as the Proton acceptor; specific for L-alanine. Residue M310 coordinates substrate.

Belongs to the alanine racemase family. It depends on pyridoxal 5'-phosphate as a cofactor.

It carries out the reaction L-alanine = D-alanine. It participates in amino-acid biosynthesis; D-alanine biosynthesis; D-alanine from L-alanine: step 1/1. Its function is as follows. Catalyzes the interconversion of L-alanine and D-alanine. May also act on other amino acids. This is Alanine racemase (alr) from Streptococcus equi subsp. equi (strain 4047).